Here is a 154-residue protein sequence, read N- to C-terminus: UPF0756 membrane protein CKR_1028 (154 aa).

Helical transmembrane passes span 5–25 (IILI…VALA), 48–68 (NGLF…IADG), 82–102 (WLGI…GLGM), and 113–133 (IMPA…GVPV).

Belongs to the UPF0756 family.

It localises to the cell membrane. This is UPF0756 membrane protein CKR_1028 from Clostridium kluyveri (strain NBRC 12016).